A 109-amino-acid polypeptide reads, in one-letter code: U26-theraphotoxin-Cg1a (109 aa).

An N-terminal signal peptide occupies residues 1–18; the sequence is MNTIIPLLLLSLLITVYA. Residues 19 to 67 constitute a propeptide that is removed on maturation; sequence YALEDGNKEEIQDIAESEFEASNEMLQLAHLLEADRAETEEDRNSRQKR. Cystine bridges form between Cys-68–Cys-83, Cys-75–Cys-88, and Cys-82–Cys-103.

The protein belongs to the neurotoxin 14 (magi-1) family. 07 (Jztx-56) subfamily. In terms of tissue distribution, expressed by the venom gland.

The protein localises to the secreted. Probable ion channel inhibitor. The sequence is that of U26-theraphotoxin-Cg1a from Chilobrachys guangxiensis (Chinese earth tiger tarantula).